The primary structure comprises 318 residues: D-alanine--D-alanine ligase (318 aa).

An ATP-grasp domain is found at 101 to 307 (KKIIQYEGLP…FPDLIEKLVE (207 aa)). Position 135-190 (135-190 (CREMGLPLVVKAPTQGSTIGMSFVHKEEDMAGALELAYDYDPVALVEQFIRGTEVT)) interacts with ATP. Mg(2+) is bound by residues D261, E274, and N276.

The protein belongs to the D-alanine--D-alanine ligase family. It depends on Mg(2+) as a cofactor. Requires Mn(2+) as cofactor.

Its subcellular location is the cytoplasm. It catalyses the reaction 2 D-alanine + ATP = D-alanyl-D-alanine + ADP + phosphate + H(+). The protein operates within cell wall biogenesis; peptidoglycan biosynthesis. In terms of biological role, cell wall formation. This is D-alanine--D-alanine ligase from Pelotomaculum thermopropionicum (strain DSM 13744 / JCM 10971 / SI).